A 254-amino-acid chain; its full sequence is C-X-C motif chemokine 16 (254 aa).

Positions 1–29 (MGRDLRPGSRVLLLLLLLLLVYLTQPGNG) are cleaved as a signal peptide. The Extracellular segment spans residues 30-205 (NEGSVTGSCY…AGPTARTSAT (176 aa)). The segment at 32-107 (GSVTGSCYCG…DLKECGHAYS (76 aa)) is chemokine. Cystine bridges form between C38/C68 and C40/C82. The interval 146 to 165 (QSTQRPTLPVGSLSSDKELT) is disordered. An N-linked (GlcNAc...) asparagine glycan is attached at N168. Positions 178-200 (SLAAGPEAGENQKQPEKNAGPTA) are disordered. Residues 206–226 (VPVLCLLAIIFILTAALSYVL) traverse the membrane as a helical segment. The Cytoplasmic segment spans residues 227 to 254 (CKRRRGQSPQSSPDLPVHYIPVAPDSNT). Residues 231 to 254 (RGQSPQSSPDLPVHYIPVAPDSNT) form a disordered region.

It belongs to the intercrine alpha (chemokine CxC) family. Post-translationally, glycosylated. In terms of tissue distribution, expressed in T-cell areas. Expressed in spleen, lymph nodes, lung, kidney, small intestine and thymus. Weak expression in heart and liver and no expression in brain and bone marrow.

The protein localises to the cell membrane. Its subcellular location is the secreted. Its function is as follows. Acts as a scavenger receptor on macrophages, which specifically binds to OxLDL (oxidized low density lipoprotein), suggesting that it may be involved in pathophysiology such as atherogenesis. Induces a strong chemotactic response. Induces calcium mobilization. Binds to CXCR6/Bonzo. This is C-X-C motif chemokine 16 (CXCL16) from Homo sapiens (Human).